The sequence spans 1175 residues: Beta-agarase AgaO (1175 aa).

The first 29 residues, 1 to 29, serve as a signal peptide directing secretion; it reads MRLSKSQGILPLAHAVLAAAIAYSTAATA. The 133-residue stretch at 32–164 folds into the CBM6 1 domain; the sequence is YRLEAEDFTN…QWNLDKMELA (133 aa). The tract at residues 169–208 is disordered; the sequence is SSSSSGGGSTSSSSSGGSSSSSGSGSSSSGGSPEEGGHVS. Over residues 178 to 200 the composition is skewed to low complexity; that stretch reads TSSSSSGGSSSSSGSGSSSSGGS. In terms of domain architecture, CBM6 2 spans 211–339; the sequence is FKLEAESAHH…QFNIDYVIFE (129 aa). The disordered stretch occupies residues 355–481; that stretch reads IADVNDSCPG…ESGCSPSQVA (127 aa). A compositionally biased stretch (basic and acidic residues) spans 382 to 393; the sequence is DTDKDGIADNRD. Positions 471–481 are enriched in polar residues; that stretch reads NESGCSPSQVA. Glutamate 661 functions as the Proton donor in the catalytic mechanism. The Nucleophile role is filled by glutamate 832.

It belongs to the glycosyl hydrolase 86 family.

It catalyses the reaction Hydrolysis of (1-&gt;4)-beta-D-galactosidic linkages in agarose, giving the tetramer as the predominant product.. Its activity is regulated as follows. Activity and stability are strongly enhanced by CaCl(2). Activity is not affected by sulfhydryl inhibitors such as iodoacetoamide and p-chloromercuribenzoate or by thiol reagents such as dithiothreitol and 2-mercaptoethanol. Strongly inhibited by N-bromosuccinimide and sodium dodecyl sulfate. Its function is as follows. Endo-type beta-agarase, which degrades agarose and agarose oligosaccharides more polymerized than hexamers to yield neoagarohexaose (NA6) as the main product, with lesser amounts of neoagarotetraose (NA4) and neoagarobiose (NA2). The chain is Beta-agarase AgaO from Microbulbifer thermotolerans.